The following is a 325-amino-acid chain: Tryptophan--tRNA ligase (325 aa).

ATP is bound by residues 9 to 11 (QPS) and 17 to 18 (GN). The 'HIGH' region motif lies at 10–18 (PSGILHIGN). D132 lines the L-tryptophan pocket. Residues 144 to 146 (GKD), V184, and 191 to 195 (KMSKS) contribute to the ATP site. Positions 191–195 (KMSKS) match the 'KMSKS' region motif.

Belongs to the class-I aminoacyl-tRNA synthetase family. In terms of assembly, homodimer.

Its subcellular location is the cytoplasm. It carries out the reaction tRNA(Trp) + L-tryptophan + ATP = L-tryptophyl-tRNA(Trp) + AMP + diphosphate + H(+). In terms of biological role, catalyzes the attachment of tryptophan to tRNA(Trp). This chain is Tryptophan--tRNA ligase, found in Fusobacterium nucleatum subsp. nucleatum (strain ATCC 25586 / DSM 15643 / BCRC 10681 / CIP 101130 / JCM 8532 / KCTC 2640 / LMG 13131 / VPI 4355).